A 352-amino-acid chain; its full sequence is Peptide chain release factor 1 (352 aa).

Gln-230 is subject to N5-methylglutamine.

Belongs to the prokaryotic/mitochondrial release factor family. Post-translationally, methylated by PrmC. Methylation increases the termination efficiency of RF1.

It is found in the cytoplasm. Peptide chain release factor 1 directs the termination of translation in response to the peptide chain termination codons UAG and UAA. The sequence is that of Peptide chain release factor 1 from Exiguobacterium sibiricum (strain DSM 17290 / CCUG 55495 / CIP 109462 / JCM 13490 / 255-15).